A 111-amino-acid polypeptide reads, in one-letter code: Ribonuclease P protein component (111 aa).

It belongs to the RnpA family. Consists of a catalytic RNA component (M1 or rnpB) and a protein subunit.

It catalyses the reaction Endonucleolytic cleavage of RNA, removing 5'-extranucleotides from tRNA precursor.. Functionally, RNaseP catalyzes the removal of the 5'-leader sequence from pre-tRNA to produce the mature 5'-terminus. It can also cleave other RNA substrates such as 4.5S RNA. The protein component plays an auxiliary but essential role in vivo by binding to the 5'-leader sequence and broadening the substrate specificity of the ribozyme. In Streptococcus thermophilus (strain ATCC BAA-491 / LMD-9), this protein is Ribonuclease P protein component.